Here is a 184-residue protein sequence, read N- to C-terminus: Large ribosomal subunit protein uL5 (184 aa).

It belongs to the universal ribosomal protein uL5 family. Part of the 50S ribosomal subunit; part of the 5S rRNA/L5/L18/L25 subcomplex. Contacts the 5S rRNA and the P site tRNA. Forms a bridge to the 30S subunit in the 70S ribosome.

In terms of biological role, this is one of the proteins that bind and probably mediate the attachment of the 5S RNA into the large ribosomal subunit, where it forms part of the central protuberance. In the 70S ribosome it contacts protein S13 of the 30S subunit (bridge B1b), connecting the 2 subunits; this bridge is implicated in subunit movement. Contacts the P site tRNA; the 5S rRNA and some of its associated proteins might help stabilize positioning of ribosome-bound tRNAs. This is Large ribosomal subunit protein uL5 from Corynebacterium kroppenstedtii (strain DSM 44385 / JCM 11950 / CIP 105744 / CCUG 35717).